Consider the following 297-residue polypeptide: CASP-like protein 2U8 (297 aa).

Over 1–10 (MLELYEKRRA) the chain is Cytoplasmic. A helical transmembrane segment spans residues 11-31 (LLLLRLAAMFLSLAALLITVL). The Extracellular portion of the chain corresponds to 32–64 (NREDGFFSINVFGSPQPILAKATADFTLVKGLK). A helical membrane pass occupies residues 65–85 (FFAGAMGIVAGYSFLQLAIAM). At 86 to 101 (ASIFSGAPSILGGKRM) the chain is on the cytoplasmic side. A helical transmembrane segment spans residues 102–122 (AWLCFVGDMTASHLCAAAAAV). At 123-148 (SAQLAYLGKRGAPMWSAVCTYFSHYC) the chain is on the extracellular side. The chain crosses the membrane as a helical span at residues 149-169 (LVFGLAVILAFLATLAALLVA). Residues 170 to 297 (SISSYHLAYD…RVLEMETPCK (128 aa)) are Cytoplasmic-facing.

It belongs to the Casparian strip membrane proteins (CASP) family. In terms of assembly, homodimer and heterodimers.

The protein localises to the cell membrane. The protein is CASP-like protein 2U8 of Selaginella moellendorffii (Spikemoss).